The chain runs to 444 residues: Phosphoglucosamine mutase (444 aa).

S102 functions as the Phosphoserine intermediate in the catalytic mechanism. Residues S102, D239, D241, and D243 each contribute to the Mg(2+) site. A Phosphoserine modification is found at S102.

This sequence belongs to the phosphohexose mutase family. Mg(2+) serves as cofactor. Post-translationally, activated by phosphorylation.

The enzyme catalyses alpha-D-glucosamine 1-phosphate = D-glucosamine 6-phosphate. Catalyzes the conversion of glucosamine-6-phosphate to glucosamine-1-phosphate. The protein is Phosphoglucosamine mutase of Mycolicibacterium paratuberculosis (strain ATCC BAA-968 / K-10) (Mycobacterium paratuberculosis).